Here is a 429-residue protein sequence, read N- to C-terminus: Trigger factor (429 aa).

The region spanning 164-249 is the PPIase FKBP-type domain; that stretch reads GDWAVIDHEG…LKALKVRQAP (86 aa).

The protein belongs to the FKBP-type PPIase family. Tig subfamily.

Its subcellular location is the cytoplasm. The catalysed reaction is [protein]-peptidylproline (omega=180) = [protein]-peptidylproline (omega=0). Involved in protein export. Acts as a chaperone by maintaining the newly synthesized protein in an open conformation. Functions as a peptidyl-prolyl cis-trans isomerase. The protein is Trigger factor of Anaeromyxobacter dehalogenans (strain 2CP-C).